We begin with the raw amino-acid sequence, 274 residues long: NAD kinase (274 aa).

The active-site Proton acceptor is D59. NAD(+) contacts are provided by residues 59 to 60 (DG), K64, 128 to 129 (ND), D158, 169 to 174 (TAYALS), and A193.

The protein belongs to the NAD kinase family. Requires a divalent metal cation as cofactor.

The protein localises to the cytoplasm. It carries out the reaction NAD(+) + ATP = ADP + NADP(+) + H(+). In terms of biological role, involved in the regulation of the intracellular balance of NAD and NADP, and is a key enzyme in the biosynthesis of NADP. Catalyzes specifically the phosphorylation on 2'-hydroxyl of the adenosine moiety of NAD to yield NADP. In Petrotoga mobilis (strain DSM 10674 / SJ95), this protein is NAD kinase.